A 143-amino-acid polypeptide reads, in one-letter code: Small ribosomal subunit protein uS11c (143 aa).

The protein belongs to the universal ribosomal protein uS11 family. Part of the 30S ribosomal subunit.

It localises to the plastid. The protein resides in the chloroplast. The sequence is that of Small ribosomal subunit protein uS11c from Oryza nivara (Indian wild rice).